Consider the following 167-residue polypeptide: Acetolactate synthase small subunit (167 aa).

An ACT domain is found at 7-81 (TLSVLVEAKP…NVIKIVELED (75 aa)).

Belongs to the acetolactate synthase small subunit family. Dimer of large and small chains.

It carries out the reaction 2 pyruvate + H(+) = (2S)-2-acetolactate + CO2. It participates in amino-acid biosynthesis; L-isoleucine biosynthesis; L-isoleucine from 2-oxobutanoate: step 1/4. Its pathway is amino-acid biosynthesis; L-valine biosynthesis; L-valine from pyruvate: step 1/4. In Mycobacterium avium, this protein is Acetolactate synthase small subunit (ilvH).